Reading from the N-terminus, the 235-residue chain is Large ribosomal subunit protein uL1 (235 aa).

Belongs to the universal ribosomal protein uL1 family. Part of the 50S ribosomal subunit.

In terms of biological role, binds directly to 23S rRNA. The L1 stalk is quite mobile in the ribosome, and is involved in E site tRNA release. Its function is as follows. Protein L1 is also a translational repressor protein, it controls the translation of the L11 operon by binding to its mRNA. The chain is Large ribosomal subunit protein uL1 from Methylobacterium sp. (strain 4-46).